The sequence spans 316 residues: Ribosomal RNA small subunit methyltransferase A (316 aa).

The S-adenosyl-L-methionine site is built by Asn33, Val35, Gly60, Glu81, Asp110, and Asn133.

It belongs to the class I-like SAM-binding methyltransferase superfamily. rRNA adenine N(6)-methyltransferase family. RsmA subfamily.

The protein localises to the cytoplasm. It catalyses the reaction adenosine(1518)/adenosine(1519) in 16S rRNA + 4 S-adenosyl-L-methionine = N(6)-dimethyladenosine(1518)/N(6)-dimethyladenosine(1519) in 16S rRNA + 4 S-adenosyl-L-homocysteine + 4 H(+). Functionally, specifically dimethylates two adjacent adenosines (A1518 and A1519) in the loop of a conserved hairpin near the 3'-end of 16S rRNA in the 30S particle. May play a critical role in biogenesis of 30S subunits. The protein is Ribosomal RNA small subunit methyltransferase A of Corynebacterium jeikeium (strain K411).